The following is a 542-amino-acid chain: LysM domain-containing protein ARB_00327 (542 aa).

The first 35 residues, 1 to 35 (MLSSVLFPAMRTLLLLKYVFSLISLSAICCQTVSA), serve as a signal peptide directing secretion. N218, N298, N381, and N415 each carry an N-linked (GlcNAc...) asparagine glycan. A LysM 1 domain is found at 264-310 (RWYGVKKGDYCNLIVLKFGITMDNFIFLNPALNSNCTNLYAEESYCV). The disordered stretch occupies residues 439-484 (DSDEPTPTTPITTSDDPTSTSATPTTPTTSSKPSPGAPTMTGQPSA). Residues 443-472 (PTPTTPITTSDDPTSTSATPTTPTTSSKPS) show a composition bias toward low complexity. A LysM 2 domain is found at 487 to 534 (KWHTVTNGESCTVIPKTFGITLEQFLAWNPTVKSDCTENFWAGYAYCV).

The protein localises to the secreted. In terms of biological role, might have a role in sequestration of chitin oligosaccharides (breakdown products of fungal cell walls that are released during invasion and act as triggers of host immunity) to dampen host defense. The polypeptide is LysM domain-containing protein ARB_00327 (Arthroderma benhamiae (strain ATCC MYA-4681 / CBS 112371) (Trichophyton mentagrophytes)).